The following is a 302-amino-acid chain: MINPLKKKPRTHFLQKAPEKPDWLKVKLTFPDPKNNPVAIVRNSLEKKKLNTVCESASCPNLNHCWSRKTATYMLGGDICTRRCSYCDVASGKPSALDRDEPKRVAESAIALGLKHVVITAVNRDDLEDGGAAHFAETVEVVREGLPDCKIELLVPDFKVRPESLEIIFQCKPDIFNHNVETIKRLFPEVAPQKKYERSLDVLKIASEKGFLTKSGLILGMGETVEEVKECMRDLIGVGVSLLTLGQYLQPTPTHLPVKSYVLPEVFQELRIYGKSIGFKGVFSGPLVRSSYHADEQVSWNP.

Positions 54, 59, 65, 80, 84, 87, and 291 each coordinate [4Fe-4S] cluster. Residues 66–280 (WSRKTATYML…RIYGKSIGFK (215 aa)) form the Radical SAM core domain.

It belongs to the radical SAM superfamily. Lipoyl synthase family. It depends on [4Fe-4S] cluster as a cofactor.

It is found in the cytoplasm. It catalyses the reaction [[Fe-S] cluster scaffold protein carrying a second [4Fe-4S](2+) cluster] + N(6)-octanoyl-L-lysyl-[protein] + 2 oxidized [2Fe-2S]-[ferredoxin] + 2 S-adenosyl-L-methionine + 4 H(+) = [[Fe-S] cluster scaffold protein] + N(6)-[(R)-dihydrolipoyl]-L-lysyl-[protein] + 4 Fe(3+) + 2 hydrogen sulfide + 2 5'-deoxyadenosine + 2 L-methionine + 2 reduced [2Fe-2S]-[ferredoxin]. It participates in protein modification; protein lipoylation via endogenous pathway; protein N(6)-(lipoyl)lysine from octanoyl-[acyl-carrier-protein]: step 2/2. Functionally, catalyzes the radical-mediated insertion of two sulfur atoms into the C-6 and C-8 positions of the octanoyl moiety bound to the lipoyl domains of lipoate-dependent enzymes, thereby converting the octanoylated domains into lipoylated derivatives. This is Lipoyl synthase from Leptospira borgpetersenii serovar Hardjo-bovis (strain JB197).